The following is a 199-amino-acid chain: Charged multivesicular body protein 1b (199 aa).

2 coiled-coil regions span residues 8–42 (LFNLKFAAKELNRNAKKCEKEEKTEKAKIKKAIQK) and 178–199 (TSVASTEQDELSQRLARLRDQV). Residues 167 to 199 (ELPQGQTGSVGTSVASTEQDELSQRLARLRDQV) form a disordered region. Positions 170–183 (QGQTGSVGTSVAST) are enriched in polar residues. An MIT-interacting motif motif is present at residues 186–196 (DELSQRLARLR).

It belongs to the SNF7 family. In terms of assembly, probable peripherally associated component of the endosomal sorting required for transport complex III (ESCRT-III).

The protein resides in the cytoplasm. It is found in the cytosol. It localises to the endosome. Its subcellular location is the late endosome membrane. Probable peripherally associated component of the endosomal sorting required for transport complex III (ESCRT-III) which is involved in multivesicular bodies (MVBs) formation and sorting of endosomal cargo proteins into MVBs. MVBs contain intraluminal vesicles (ILVs) that are generated by invagination and scission from the limiting membrane of the endosome and mostly are delivered to lysosomes enabling degradation of membrane proteins, such as stimulated growth factor receptors, lysosomal enzymes and lipids. The chain is Charged multivesicular body protein 1b (chmp1b) from Xenopus laevis (African clawed frog).